A 447-amino-acid polypeptide reads, in one-letter code: Argininosuccinate lyase (447 aa).

It belongs to the lyase 1 family. Argininosuccinate lyase subfamily.

The protein resides in the cytoplasm. The enzyme catalyses 2-(N(omega)-L-arginino)succinate = fumarate + L-arginine. Its pathway is amino-acid biosynthesis; L-arginine biosynthesis; L-arginine from L-ornithine and carbamoyl phosphate: step 3/3. The chain is Argininosuccinate lyase from Sulfolobus acidocaldarius (strain ATCC 33909 / DSM 639 / JCM 8929 / NBRC 15157 / NCIMB 11770).